A 519-amino-acid chain; its full sequence is Major facilitator superfamily domain-containing protein 8 (519 aa).

The tract at residues 1–25 (MANLGSEAEREPLLGPGSPGSREWS) is disordered. Residues 1 to 41 (MANLGSEAEREPLLGPGSPGSREWSEIETQEHYKSRWKSVR) are Cytoplasmic-facing. Residues 13–14 (LL) carry the Dileucine internalization motif motif. Residues 42–62 (ILYLTMFLSSVGFSIVIMSIW) form a helical membrane-spanning segment. At 63-75 (PYLQKIDQTADAS) the chain is on the extracellular side. A helical membrane pass occupies residues 76 to 96 (FLGWVIASYSLGQMVASPLFG). The Cytoplasmic segment spans residues 97-106 (LWSNYRPRKE). The chain crosses the membrane as a helical span at residues 107-127 (PLIVSISISVAANCLYAYVHV). At 128 to 140 (PAAHNKYYMLIAR) the chain is on the extracellular side. The helical transmembrane segment at 141 to 161 (GLVGFGAGNVAVVRSYIAGAT) threads the bilayer. Residues 162–174 (SLQERTNAMANTS) are Cytoplasmic-facing. A helical membrane pass occupies residues 175-195 (TCQALGFILGPVFQTCFALIG). Over 196–212 (EKGVTWDIIKLQVNMYT) the chain is Extracellular. Residues 213 to 233 (APVLLAAFLGILNIILILFIL) form a helical membrane-spanning segment. Over 234 to 267 (REHRVDDLGRQCKSVNFQEENTDEPQIPEGSIDQ) the chain is Cytoplasmic. Residues 268–288 (VAVVATNIVFFVVLFIFAVYE) traverse the membrane as a helical segment. Residues 289-310 (TILTPLTLDMYAWTQEQAVLYD) lie on the Extracellular side of the membrane. The chain crosses the membrane as a helical span at residues 311-331 (GILLVAFGVEAVLVFMGVKLL). Residues 332-338 (SKKIGER) are Cytoplasmic-facing. Residues 339–359 (AILLGGFVVVWVGFFILLPWG) traverse the membrane as a helical segment. At 360–416 (NQFPKIQWEDLHNSSTPNTTFGEIIIGLWNSSREDHSEQPTGCPIEQTWCLYTPVIH) the chain is on the extracellular side. N-linked (GlcNAc...) asparagine glycosylation is found at Asn372 and Asn377. A helical membrane pass occupies residues 417-439 (LAQFLTAAVLIGTGYPACSVMSY). The Cytoplasmic portion of the chain corresponds to 440-452 (TLYSKVLGPKPQG). A helical membrane pass occupies residues 453–473 (IYMGWLTTSGSAARILGPVFI). Residues 474-483 (SHVYTYLGPR) are Extracellular-facing. The chain crosses the membrane as a helical span at residues 484–504 (WAFSLVCGIVVLTILLIGAVY). Residues 505–519 (KRLVAFSVRYMRIQE) are Cytoplasmic-facing.

The protein belongs to the major facilitator superfamily.

It localises to the endosome membrane. The protein resides in the lysosome membrane. The enzyme catalyses chloride(in) = chloride(out). It catalyses the reaction iodide(out) = iodide(in). It carries out the reaction fluoride(in) = fluoride(out). Its function is as follows. Outward-rectifying chloride channel involved in endolysosomal chloride homeostasis, membrane fusion and function. Conducts chloride currents up to hundreds of picoamperes. Regulates lysosomal calcium content by reducing the lysosomal membrane potential, thereby activating TRPML1 channel and further release of lysosomal calcium ions. Regulates the pH in endolysosomal compartments and may contribute to progressive acidification from endosome to lysosome. Permeable to other halides such as iodide and fluoride ions. This chain is Major facilitator superfamily domain-containing protein 8, found in Mus musculus (Mouse).